A 201-amino-acid polypeptide reads, in one-letter code: E3 ubiquitin-protein ligase MIR1 (201 aa).

An RING-CH-type zinc finger spans residues 1 to 58 (MDSTGEFCWICHQPEGPLKRFCGCKGSCAVSHQDCLRGWLETSRRQTCALCGTPYSMK). Topologically, residues 1 to 81 (MDSTGEFCWI…EEVLAAMEAC (81 aa)) are cytoplasmic. Zn(2+) contacts are provided by cysteine 8, cysteine 11, cysteine 22, cysteine 24, histidine 32, cysteine 35, cysteine 48, and cysteine 51. Residues 52-79 (GTPYSMKWKTKPLREWTWGEEEVLAAME) are DIRT. A helical membrane pass occupies residues 82-102 (LPLVLIPLAVLMIVMGTWLLV). Over 103 to 113 (NHNGFLSPRMQ) the chain is Extracellular. Residues 114–134 (VVLVVIVLLAMIVFSASASYV) traverse the membrane as a helical segment. The Cytoplasmic portion of the chain corresponds to 135-201 (MVEGPGCLDT…RLGCVRLCCV (67 aa)).

As to quaternary structure, interacts with host UBE2J2.

It is found in the host endoplasmic reticulum membrane. The catalysed reaction is [E2 ubiquitin-conjugating enzyme]-S-ubiquitinyl-L-cysteine + [acceptor protein]-L-cysteine = [E2 ubiquitin-conjugating enzyme]-L-cysteine + [acceptor protein]-S-ubiquitinyl-L-cysteine.. The protein operates within protein modification; protein ubiquitination. In terms of biological role, E3 ubiquitin-protein ligase that mediates ubiquitination of host surface class I (MHC-I) H-2D(b)/H2-D1 and H-2K(b)/H2-K1 molecules before they exit the endoplasmic reticulum, leading to their degradation by the endoplasmic reticulum-associated degradation (ERAD) system, thus blocking the immune detection of virus-infected cells. Mediates ubiquitination of lysine, as well as serine and threonine residues present in the cytoplasmic tail of surface class I molecules. Promotes ubiquitination of hydroxylated serine or threonine residues via ester bonds instead of the classical isopeptide linkage. The protein is E3 ubiquitin-protein ligase MIR1 (K3) of Murid herpesvirus 4 (MuHV-4).